The sequence spans 345 residues: Eukaryotic translation initiation factor 3 subunit F (345 aa).

In terms of domain architecture, MPN spans 30 to 166 (VVIHPQALFS…TRAYISAPVG (137 aa)). The interval 308–345 (GGESGNAESGQRGGQRGGKGGRGGQQRTQDRSGEEARA) is disordered. Positions 318–331 (QRGGQRGGKGGRGG) are enriched in gly residues. Over residues 335–345 (TQDRSGEEARA) the composition is skewed to basic and acidic residues.

It belongs to the eIF-3 subunit F family. As to quaternary structure, component of the eukaryotic translation initiation factor 3 (eIF-3) complex.

Its subcellular location is the cytoplasm. Its function is as follows. Component of the eukaryotic translation initiation factor 3 (eIF-3) complex, which is involved in protein synthesis of a specialized repertoire of mRNAs and, together with other initiation factors, stimulates binding of mRNA and methionyl-tRNAi to the 40S ribosome. The eIF-3 complex specifically targets and initiates translation of a subset of mRNAs involved in cell proliferation. In Aspergillus oryzae (strain ATCC 42149 / RIB 40) (Yellow koji mold), this protein is Eukaryotic translation initiation factor 3 subunit F.